The sequence spans 521 residues: Caspase-10 (521 aa).

The propeptide occupies 1–219 (MKSQGQHWYS…GEEELVSQTD (219 aa)). DED domains follow at residues 19–97 (SFRE…HLNC) and 114–187 (LFRN…NIEK). Composition is skewed to polar residues over residues 231 to 248 (SWQN…TNGA) and 259 to 268 (ASANTLNSET). The segment at 231–269 (SWQNKHAGSNGNRATNGAPSLVSRGMQGASANTLNSETS) is disordered. Residues His358 and Cys401 contribute to the active site.

The protein belongs to the peptidase C14A family. Heterotetramer that consists of two anti-parallel arranged heterodimers, each one formed by a 23/17 kDa (p23/17) (depending on the splicing events) and a 12 kDa (p12) subunit. Self-associates. Interacts with FADD and CASP8. Found in a Fas signaling complex consisting of FAS, FADD, CASP8 and CASP10. Interacts with RFFL and RNF34; negatively regulate CASP10 through proteasomal degradation. Interacts with RIOK3. In terms of processing, cleavage by granzyme B and autocatalytic activity generate the two active subunits. As to expression, detectable in most tissues. Lowest expression is seen in brain, kidney, prostate, testis and colon.

It catalyses the reaction Strict requirement for Asp at position P1 and has a preferred cleavage sequence of Leu-Gln-Thr-Asp-|-Gly.. Involved in the activation cascade of caspases responsible for apoptosis execution. Recruited to both Fas- and TNFR-1 receptors in a FADD dependent manner. May participate in the granzyme B apoptotic pathways. Cleaves and activates effector caspases CASP3, CASP4, CASP6, CASP7, CASP8 and CASP9. Hydrolyzes the small- molecule substrates, Tyr-Val-Ala-Asp-|-AMC and Asp-Glu-Val-Asp-|-AMC. Its function is as follows. Isoform 7 can enhance NF-kappaB activity but promotes only slight apoptosis. In terms of biological role, isoform C is proteolytically inactive. This chain is Caspase-10 (CASP10), found in Homo sapiens (Human).